Consider the following 144-residue polypeptide: Large ribosomal subunit protein uL16 (144 aa).

The protein belongs to the universal ribosomal protein uL16 family. In terms of assembly, part of the 50S ribosomal subunit.

Functionally, binds 23S rRNA and is also seen to make contacts with the A and possibly P site tRNAs. The chain is Large ribosomal subunit protein uL16 from Natranaerobius thermophilus (strain ATCC BAA-1301 / DSM 18059 / JW/NM-WN-LF).